The sequence spans 894 residues: Microsomal triglyceride transfer protein large subunit (894 aa).

Positions 1-18 are cleaved as a signal peptide; the sequence is MILLAVLFLCFISSYSAS. The region spanning 28–662 is the Vitellogenin domain; that stretch reads LNNDRLYKLK…YVGKTPLHAI (635 aa). A disulfide bridge links Cys174 with Cys194.

As to quaternary structure, heterodimer; heterodimerizes with the protein disulfide isomerase (P4HB/PDI). Interacts with APOB. Interacts with PRAP1.

Its subcellular location is the endoplasmic reticulum. It localises to the golgi apparatus. It catalyses the reaction a 1,2-diacyl-sn-glycero-3-phosphocholine(in) = a 1,2-diacyl-sn-glycero-3-phosphocholine(out). The enzyme catalyses a 1,2-diacyl-sn-glycero-3-phosphoethanolamine(in) = a 1,2-diacyl-sn-glycero-3-phosphoethanolamine(out). The catalysed reaction is a cholesterol ester(in) = a cholesterol ester(out). It carries out the reaction a triacyl-sn-glycerol(in) = a triacyl-sn-glycerol(out). In terms of biological role, catalyzes the transport of triglyceride, cholesteryl ester, and phospholipid between phospholipid surfaces. Required for the assembly and secretion of plasma lipoproteins that contain apolipoprotein B. May be involved in regulating cholesteryl ester biosynthesis in cells that produce lipoproteins. This Sus scrofa (Pig) protein is Microsomal triglyceride transfer protein large subunit (MTTP).